The chain runs to 482 residues: MSFIFKFIATFVRKMLELLQFGGKTLTHTLSIYVKTNTGKTLTVNLEPQWDIKNVKELVAPQLGLQPDDLKIIFAGKELSDATTIEQCDLGQQSVLHAIRLRPPVQRQKIQSATLEEEEPSLSDEASKPLNETLLDLQLESEERLNITDEERVRAKAHFFVHCSQCDKLCNGKLRVRCALCKGGAFTVHRDPECWDDVLKSRRIPGHCESLEVACVDNAAGDPPFAEFFFKCAEHVSGGEKDFAAPLNLIKNNIKNVPCLACTDVSDTVLVFPCASQHVTCIDCFRHYCRSRLGERQFMPHPDFGYTLPCPAGCEHSFIEEIHHFKLLTREEYDRYQRFATEEYVLQAGGVLCPQPGCGMGLLVEPDCRKVTCQNGCGYVFCRNCLQGYHIGECLPEGTGASATNSCEYTVDPNRAAEARWDEASNVTIKVSTKPCPKCRTPTERDGGCMHMVCTRAGCGFEWCWVCQTEWTRDCMGAHWFG.

One can recognise a Ubiquitin-like domain in the interval 30-99 (LSIYVKTNTG…LGQQSVLHAI (70 aa)). The residue at position 94 (S94) is a Phosphoserine; by Pink1. Residues 157–246 (AHFFVHCSQC…SGGEKDFAAP (90 aa)) form an RING-type 0; atypical zinc finger. Zn(2+)-binding residues include C163, C166, C178, and C181. Phosphothreonine; by Pink1 is present on T187. Residues C208, C232, H235, C259, C262, C274, H278, C281, C284, C310, C314, C353, C358, C373, C377, C382, C385, H390, C394, C436, and C439 each contribute to the Zn(2+) site. The segment at 255 to 482 (KNVPCLACTD…RDCMGAHWFG (228 aa)) is TRIAD supradomain. The segment at 259–314 (CLACTDVSDTVLVFPCASQHVTCIDCFRHYCRSRLGERQFMPHPDFGYTLPCPAGC) adopts an RING-type 1 zinc-finger fold. IBR-type zinc fingers lie at residues 334–394 (DRYQ…IGEC) and 432–473 (STKP…EWTR). The segment at 436-467 (CPKCRTPTERDGGCMHMVCTRAGCGFEWCWVC) adopts an RING-type 2; atypical zinc-finger fold. C449 is an active-site residue. Residues C454, C459, C464, C467, C475, and H479 each contribute to the Zn(2+) site.

Belongs to the RBR family. Parkin subfamily. Forms an E3 ubiquitin ligase complex with E2 ubiquitin-conjugating enzymes. Interacts with Pink1. Interacts with Marf. Interacts with Paris. Interacts with septins Septin1 and pnut. Post-translationally, auto-ubiquitinates in an E2-dependent manner leading to its own degradation. In terms of processing, phosphorylated. Activation requires phosphorylation at Ser-94 by Pink1 and binding to Pink1-phosphorylated polyubiquitin chains. Phosphorylation at Thr-187 by Pink1 is also important for mitochondrial localization. As to expression, in oocytes, accumulates in early egg chambers where it is enriched until stages 9-10, localizing mainly to the posterior pole and anterior margin (at protein level). After stage 10 it is no longer detected in the oocyte (at protein level). In embryos, ubiquitously expressed in the early stages (stages 2 to 5) (at protein level). Expression levels decrease at later stages and becomes restricted to the brain and nerve cord from stage 9 (at protein level). Relatively higher levels of expression in the head compared to the body. Enriched in the dorsomedial (DM) dopaminergic neurons.

The protein localises to the mitochondrion. The protein resides in the cytoplasm. Its subcellular location is the cytosol. It carries out the reaction [E2 ubiquitin-conjugating enzyme]-S-ubiquitinyl-L-cysteine + [acceptor protein]-L-lysine = [E2 ubiquitin-conjugating enzyme]-L-cysteine + [acceptor protein]-N(6)-ubiquitinyl-L-lysine.. The protein operates within protein modification; protein ubiquitination. In the autoinhibited state the side chain of Phe-481 inserts into a hydrophobic groove in RING-0, occluding the ubiquitin acceptor site Cys-449, whereas the REP repressor element binds RING-1 and blocks its E2-binding site. Activation of park requires 2 steps: (1) phosphorylation at Ser-94 by Pink1 and (2) binding to phosphorylated ubiquitin, leading to unlock repression of the catalytic Cys-449 by the RING-0 region via an allosteric mechanism and converting park to its fully-active form. According to another report, phosphorylation at Ser-94 by Pink1 is not essential for activation and only binding to phosphorylated ubiquitin is essential to unlock repression. E3 ubiquitin-protein ligase which accepts ubiquitin from E2 ubiquitin-conjugating enzymes in the form of a thioester and then directly transfers the ubiquitin to targeted substrates, such as Paris, Marf, Opa1, Miro, pnut, Septin1, Tom20 and porin. Mediates monoubiquitination as well as 'Lys-6', 'Lys-11', 'Lys-48'-linked and 'Lys-63'-linked polyubiquitination of substrates, depending on the context. Protects against mitochondrial dysfunction during cellular stress, by acting downstream of Pink1, to coordinate mitochondrial quality control mechanisms that remove and replace dysfunctional mitochondrial components. Depending on the severity of mitochondrial damage and/or dysfunction, activity ranges from preventing apoptosis and stimulating mitochondrial biogenesis to regulating mitochondrial dynamics and eliminating severely damaged mitochondria via mitophagy. Appears to be particularly important in maintaining the physiology and function of cells with high energy demands that are undergoing stress or altered metabolic environment, including spermatids, muscle cells and neurons such as the dopaminergic (DA) neurons. Activation and recruitment onto the outer membrane of damaged/dysfunctional mitochondria (OMM) requires Pink1-mediated phosphorylation of both park and ubiquitin. In depolarized mitochondria, mediates the decision between mitophagy or preventing apoptosis by inducing either the poly- or monoubiquitination of porin/VDAC; polyubiquitination of porin promotes mitophagy, while monoubiquitination of porin decreases mitochondrial calcium influx which ultimately inhibits apoptosis. When cellular stress results in irreversible mitochondrial damage, promotes the autophagic degradation of dysfunctional depolarized mitochondria (mitophagy) by promoting the ubiquitination of mitochondrial proteins. Preferentially assembles 'Lys-6'-, 'Lys-11'- and 'Lys-63'-linked polyubiquitin chains following mitochondrial damage, leading to mitophagy. In developing tissues, inhibits JNK-mediated apoptosis by negatively regulating bsk transcription. The Pink1-park pathway also promotes fission and/or inhibits fusion of damaged mitochondria by mediating the ubiquitination and subsequent degradation of proteins involved in mitochondrial fusion/fission such as Marf, Opa1 and fzo. This prevents the refusion of unhealthy mitochondria with the healthy mitochondrial network and/or initiates mitochondrial fragmentation facilitating their later engulfment by autophagosomes. Regulates motility of damaged mitochondria by phosphorylating Miro which likely promotes its park-dependent degradation by the proteasome; in motor neurons, this inhibits mitochondrial intracellular anterograde transport along the axons which probably increases the chance of the mitochondria being eliminated in the soma. The Pink1-park pathway is also involved in mitochondrial regeneration processes such as promoting mitochondrial biogenesis, activating localized mitochondrial repair, promoting selective turnover of mitochondrial proteins and initiating the mitochondrial import of endogenous proteins. Involved in mitochondrial biogenesis via the ubiquitination of transcriptional repressor Paris which leads to its subsequent proteasomal degradation and allows activation of the transcription factor srl. Promotes localized mitochondrial repair by activating the translation of specific nuclear-encoded mitochondrial RNAs (nc-mtRNAs) on the mitochondrial surface, including several key electron transport chain component nc-mtRNAs. The sequence is that of E3 ubiquitin-protein ligase parkin from Drosophila melanogaster (Fruit fly).